A 54-amino-acid chain; its full sequence is Hydrophobic protein RCI2A (54 aa).

2 helical membrane-spanning segments follow: residues 2–22 and 32–52; these read STATFVDIIIAILLPPLGVFL and ICLVLTLLGYIPGIIYAIYVL.

This sequence belongs to the UPF0057 (PMP3) family.

The protein resides in the membrane. This Arabidopsis thaliana (Mouse-ear cress) protein is Hydrophobic protein RCI2A (RCI2A).